We begin with the raw amino-acid sequence, 217 residues long: Vesicle transport through interaction with t-SNAREs homolog 1A (217 aa).

The Cytoplasmic segment spans residues 1–192 (MSSDFEGYEQ…GMLRRIIQNR (192 aa)). Coiled coils occupy residues 31–92 (PDEK…KRSR) and 112–178 (ENQR…GKSS). A helical transmembrane segment spans residues 193-213 (ILLVILGIIVVITILMAITFS). The Extracellular portion of the chain corresponds to 214–217 (VRRH).

The protein belongs to the VTI1 family. Interacts with distinct SNARE complexes that contain either STX5 or STX6. Interacts with NAPA and, to a lesser extent, with NAPG. Identified in a complex containing STX6, STX12, VAMP4 and VTI1A.

Its subcellular location is the cytoplasmic vesicle. The protein resides in the golgi apparatus membrane. Its function is as follows. V-SNARE that mediates vesicle transport pathways through interactions with t-SNAREs on the target membrane. These interactions are proposed to mediate aspects of the specificity of vesicle trafficking and to promote fusion of the lipid bilayers. Involved in vesicular transport from the late endosomes to the trans-Golgi network. Along with VAMP7, involved in an non-conventional RAB1-dependent traffic route to the cell surface used by KCNIP1 and KCND2. May be involved in increased cytokine secretion associated with cellular senescence. In Homo sapiens (Human), this protein is Vesicle transport through interaction with t-SNAREs homolog 1A (VTI1A).